Consider the following 439-residue polypeptide: Adenylosuccinate synthetase (439 aa).

GTP-binding positions include 12-18 (GDEGKGK) and 40-42 (GHT). Aspartate 13 (proton acceptor) is an active-site residue. Mg(2+) contacts are provided by aspartate 13 and glycine 40. Residues 13–16 (DEGK), 38–41 (NAGH), threonine 137, arginine 151, glutamine 232, threonine 247, and arginine 311 contribute to the IMP site. Residue histidine 41 is the Proton donor of the active site. 307–313 (ATTGRPR) contributes to the substrate binding site. GTP contacts are provided by residues arginine 313, 339 to 341 (KLD), and 421 to 423 (SNG).

The protein belongs to the adenylosuccinate synthetase family. In terms of assembly, homodimer. Mg(2+) serves as cofactor.

The protein resides in the cytoplasm. The enzyme catalyses IMP + L-aspartate + GTP = N(6)-(1,2-dicarboxyethyl)-AMP + GDP + phosphate + 2 H(+). The protein operates within purine metabolism; AMP biosynthesis via de novo pathway; AMP from IMP: step 1/2. Its function is as follows. Plays an important role in the de novo pathway of purine nucleotide biosynthesis. Catalyzes the first committed step in the biosynthesis of AMP from IMP. The protein is Adenylosuccinate synthetase of Salinibacter ruber (strain DSM 13855 / M31).